Consider the following 263-residue polypeptide: Receptor-transporting protein 1 (263 aa).

The Cytoplasmic portion of the chain corresponds to Met-1–Ser-238. The 3CxxC-type zinc-finger motif lies at Ala-88–Gly-197. Residues Ile-239–Phe-259 traverse the membrane as a helical segment. The Extracellular segment spans residues Arg-260 to Val-263.

This sequence belongs to the TMEM7 family. Interacts with olfactory receptors. Expressed in testis.

It is found in the cell membrane. Its function is as follows. Specifically promotes functional cell surface expression of olfactory receptors, but not of other GPCRs. This Homo sapiens (Human) protein is Receptor-transporting protein 1 (RTP1).